Here is a 128-residue protein sequence, read N- to C-terminus: Insulin-like 3 (128 aa).

The signal sequence occupies residues 1–15; the sequence is MHALLLLLLLALGSA. Intrachain disulfides connect Cys-29-Cys-113, Cys-41-Cys-126, and Cys-112-Cys-117. Residues 81–94 show a composition bias toward low complexity; that stretch reads ALDPDPALDPQLPH. The tract at residues 81–101 is disordered; sequence ALDPDPALDPQLPHQASQRQR.

It belongs to the insulin family. In terms of assembly, heterodimer of a B chain and an A chain linked by two disulfide bonds. Expressed in Leydig cells of the testis, and weakly in the theca interna cells of antral follicles and the corpus luteum of the ovary.

It localises to the secreted. Its function is as follows. Seems to play a role in testicular function. May be a trophic hormone with a role in testicular descent in fetal life. Is a ligand for LGR8 receptor. This is Insulin-like 3 (Insl3) from Rattus norvegicus (Rat).